The following is a 1185-amino-acid chain: MSKRKLGHDGNSHELDEEEEEEEEDDDDELIHSTQDQDRPHKQQRVENGKQMTPTKQHQQQQQQQPISNGRLKKLKAQSSDEESGSSEDDDEDVEDVDSSGSDSGSSDDDDDDDDDDDDDDGNSEDEREAVRREQQLKSGVTEPEAGIIESITLENFMCHRHFKLDFCSNVNFIAGENGSGKSAVLIALIVCLGAKAGFTNRGSKLSDLVKAETNTAVITVKLRNQGQEAFKPEKYGKSVIIERRISRTGSSGYKVKDYNGKTVSDKFNDVSLILEQFNIQIDNPMSILTQDTSRQFLNSAGPQDKYKSFLMATQLDKMTKDYTTIREHIDKIKDMLSQKVVVIQELEKKVREYNKEYKDLQQMVGLERKISEFKNQLAWSFVVESEREAKRKEKQVAEAEERSFDNDIRKVDETIETYNKSIEDIKKDIKEFTDQIKIQEQKKETNNREILTIEREEAKIQTQIEANNKKRQQRKQRRHLQLQSINEIKERNAQLANNQSKLDEIKKKGQQKLQLEARKEELIKEKEDLMRDRENLKRDHQNQRTITQQMNREYEGLRVQLNNLRSTQKGENQAYGKGMTDFLHKIEASRRNFSKLPIGPIGLSLKIKNESWAFAIESAISKATLRNFLVFSIPDGITLQKLGHQFGIKVDYTKIPETTEVYKTVEHDELDPSLATVLRVLDSPSHFIINFLIDTKKVEQIGLGNDRKEIDSVLYTDRCPRGLSQFFDPQGNNYSKTKSGNPFYQAAKNSGEATMLRVNSDAAIQRTQRDMESKLPALNQQKKIEQELSSDVQAIEHKISQNDQDQNQCSRKILQITNEIKSIEDTLVQQTDDYSELEIGLASLDEEIKSMDEEINIQKAQRTEVAAQKGPFAENNRALDDQIDVLSNQLGNIENNLRKFNEGLRKLNNNKQALLQQQGRSAQERDQFKAEYQRILEIVKEKTDKATQICERIEIPTNETNTTLTNKIIQYTKQLEKESRGKRSRTEALKLFQDANNSLKEISEQRDNIEELATILERNLNERYKKWQRFRLSISRRSDQYFNIFLSKKGYTGSLTFDHQNGKLDINVELQKALPSNQNGTAKGDTKGLSGGERSFSTVSLLLAFWENMECPFRAMDEFDVFMDEVNRSISINLLMSKAEENRSKQYIFVTPLALNHIKTSEYVKVFRVRAPVRTGGDVTVETD.

Positions 1–144 (MSKRKLGHDG…QQLKSGVTEP (144 aa)) are disordered. Residues 15 to 29 (LDEEEEEEEEDDDDE) show a composition bias toward acidic residues. Over residues 35 to 48 (QDQDRPHKQQRVEN) the composition is skewed to basic and acidic residues. 2 stretches are compositionally biased toward acidic residues: residues 80–98 (SDEE…EDVD) and 106–128 (SSDD…EDER). 176-183 (GENGSGKS) contributes to the ATP binding site. Residues 337–570 (LSQKVVVIQE…QLNNLRSTQK (234 aa)) are a coiled coil. Residues 571-807 (GENQAYGKGM…HKISQNDQDQ (237 aa)) are flexible hinge. A coiled-coil region spans residues 808–1024 (NQCSRKILQI…TILERNLNER (217 aa)).

The protein belongs to the SMC family. SMC6 subfamily. Forms a heterodimer with smc5.

The protein resides in the nucleus. Its subcellular location is the chromosome. In terms of biological role, core component of the smc5-smc6 complex, a complex involved in DNA double-strand breaks by homologous recombination. The complex may promote sister chromatid homologous recombination by recruiting the smc1-smc3 cohesin complex to double-strand breaks. The protein is Structural maintenance of chromosomes protein 6 (smc6) of Dictyostelium discoideum (Social amoeba).